A 287-amino-acid polypeptide reads, in one-letter code: D-alanine--D-alanine ligase (287 aa).

One can recognise an ATP-grasp domain in the interval 98–283; it reads KTKQIAQSVG…FDDVVRITVE (186 aa). Residue 124–169 participates in ATP binding; that stretch reads PVIIKPVDEGSSKGLFLCNNKEEAEEAVKKLAKPIIEDYIIGEELT. Mg(2+) contacts are provided by Asp238, Glu250, and Asn252.

The protein belongs to the D-alanine--D-alanine ligase family. Mg(2+) serves as cofactor. It depends on Mn(2+) as a cofactor.

Its subcellular location is the cytoplasm. It carries out the reaction 2 D-alanine + ATP = D-alanyl-D-alanine + ADP + phosphate + H(+). Its pathway is cell wall biogenesis; peptidoglycan biosynthesis. Functionally, cell wall formation. The protein is D-alanine--D-alanine ligase of Fusobacterium nucleatum subsp. nucleatum (strain ATCC 25586 / DSM 15643 / BCRC 10681 / CIP 101130 / JCM 8532 / KCTC 2640 / LMG 13131 / VPI 4355).